The primary structure comprises 474 residues: tRNA-2-methylthio-N(6)-dimethylallyladenosine synthase (474 aa).

An MTTase N-terminal domain is found at 3–120 (KKLHIKTWGC…LPEMINSVRG (118 aa)). [4Fe-4S] cluster is bound by residues cysteine 12, cysteine 49, cysteine 83, cysteine 157, cysteine 161, and cysteine 164. The region spanning 143–375 (RAEGPTAFVS…QERINQQAMA (233 aa)) is the Radical SAM core domain. The TRAM domain occupies 378–441 (RRMLGTTQRI…PNSLRGKVVR (64 aa)).

Belongs to the methylthiotransferase family. MiaB subfamily. Monomer. [4Fe-4S] cluster is required as a cofactor.

Its subcellular location is the cytoplasm. The catalysed reaction is N(6)-dimethylallyladenosine(37) in tRNA + (sulfur carrier)-SH + AH2 + 2 S-adenosyl-L-methionine = 2-methylsulfanyl-N(6)-dimethylallyladenosine(37) in tRNA + (sulfur carrier)-H + 5'-deoxyadenosine + L-methionine + A + S-adenosyl-L-homocysteine + 2 H(+). The enzyme catalyses N(6)-dimethylallyladenosine(37) in tRNA + (sulfur carrier)-SH + AH2 + S-adenosyl-L-methionine = 2-thio-N(6)-dimethylallyladenosine(37) in tRNA + (sulfur carrier)-H + 5'-deoxyadenosine + L-methionine + A + H(+). It catalyses the reaction 2-thio-N(6)-dimethylallyladenosine(37) in tRNA + S-adenosyl-L-methionine = 2-methylsulfanyl-N(6)-dimethylallyladenosine(37) in tRNA + S-adenosyl-L-homocysteine + H(+). Its function is as follows. Catalyzes the methylthiolation of N6-(dimethylallyl)adenosine (i(6)A), leading to the formation of 2-methylthio-N6-(dimethylallyl)adenosine (ms(2)i(6)A) at position 37 in tRNAs that read codons beginning with uridine. This is tRNA-2-methylthio-N(6)-dimethylallyladenosine synthase from Salmonella typhimurium (strain LT2 / SGSC1412 / ATCC 700720).